The chain runs to 287 residues: N-acetylmannosamine kinase (287 aa).

ATP is bound by residues 5–12 and 131–138; these read AIDIGGTK and GVGGGIII. Zn(2+)-binding residues include histidine 155, cysteine 165, cysteine 167, and cysteine 172.

This sequence belongs to the ROK (NagC/XylR) family. NanK subfamily. In terms of assembly, homodimer.

It catalyses the reaction an N-acyl-D-mannosamine + ATP = an N-acyl-D-mannosamine 6-phosphate + ADP + H(+). It functions in the pathway amino-sugar metabolism; N-acetylneuraminate degradation; D-fructose 6-phosphate from N-acetylneuraminate: step 2/5. Catalyzes the phosphorylation of N-acetylmannosamine (ManNAc) to ManNAc-6-P. The chain is N-acetylmannosamine kinase from Vibrio cholerae serotype O1 (strain ATCC 39541 / Classical Ogawa 395 / O395).